The chain runs to 1108 residues: TBC1 domain family member 8B (1108 aa).

GRAM domains are found at residues 143 to 210 (LRFE…ERTS) and 283 to 351 (QSFR…ELPD). Residues 469–656 (GVPETLRGEL…NVVDCFFYDG (188 aa)) enclose the Rab-GAP TBC domain. Positions 822-857 (HSRSLARSAFHLLDENGDGLVNFKEFICGLDILYNR) constitute an EF-hand domain. Ca(2+) contacts are provided by D835, N837, D839, and E846. The interval 961–1059 (GRKLQDSSPQ…PTDTPSSPCT (99 aa)) is disordered. Residues 967–998 (SSPQKTPQTTPTSTSQPESSPTKPTSPESETP) are compositionally biased toward low complexity. Polar residues predominate over residues 1010–1024 (SPVSQHETAPSHSDI). Low complexity predominate over residues 1025–1057 (TPNSTSHPSTPTSSPTETSSPVLDTPTDTPSSP).

Its subcellular location is the cytoplasm. The protein localises to the cytosol. Functionally, involved in vesicular recycling, probably as a GTPase-activating protein for Rab family protein(s). This Danio rerio (Zebrafish) protein is TBC1 domain family member 8B (tbc1d8b).